Consider the following 122-residue polypeptide: UPF0231 protein VF_2154 (122 aa).

It belongs to the UPF0231 family.

In Aliivibrio fischeri (strain ATCC 700601 / ES114) (Vibrio fischeri), this protein is UPF0231 protein VF_2154.